The sequence spans 144 residues: Putative pre-16S rRNA nuclease (144 aa).

This sequence belongs to the YqgF nuclease family.

Its subcellular location is the cytoplasm. Could be a nuclease involved in processing of the 5'-end of pre-16S rRNA. In Mycoplasma mobile (strain ATCC 43663 / 163K / NCTC 11711) (Mesomycoplasma mobile), this protein is Putative pre-16S rRNA nuclease.